The primary structure comprises 60 residues: Large ribosomal subunit protein eL37 (60 aa).

Zn(2+)-binding residues include cysteine 19, cysteine 22, cysteine 34, and cysteine 37. A C4-type zinc finger spans residues 19 to 37 (CRRCGRISFHAQKKVCSSC).

It belongs to the eukaryotic ribosomal protein eL37 family. Requires Zn(2+) as cofactor.

Its function is as follows. Binds to the 23S rRNA. This chain is Large ribosomal subunit protein eL37, found in Methanoregula boonei (strain DSM 21154 / JCM 14090 / 6A8).